We begin with the raw amino-acid sequence, 344 residues long: Melanocyte-stimulating hormone receptor (344 aa).

At 1–37 (MPMQGAQRKLLGSLNSTPTATSNLGLAANHTGAPCLE) the chain is on the extracellular side. Asn-29 carries an N-linked (GlcNAc...) asparagine glycan. Residues 38–63 (VPIPDGLFLSLGLVSLVENVLVVAAI) traverse the membrane as a helical segment. Residues 64–72 (AKNRNLHSS) are Cytoplasmic-facing. Residues 73–93 (MYCFICCLAVSDLLVSGSNML) traverse the membrane as a helical segment. Residues 94–118 (ETAIILLLEAGALVTRASVVQQLHN) are Extracellular-facing. Residues 119–140 (TIDVLTCSSMLCSLCFLGAIAV) form a helical membrane-spanning segment. Residues 141–163 (DRYISIFYALRYHSIMTLPRAQR) lie on the Cytoplasmic side of the membrane. Residues 164–183 (AIAAIWVASVLSSTLFITYY) form a helical membrane-spanning segment. The Extracellular portion of the chain corresponds to 184 to 191 (DHAAVLLC). Residues 192-211 (LVVFFLAMLVLMAVLYVHML) traverse the membrane as a helical segment. The Cytoplasmic portion of the chain corresponds to 212-240 (ARACQHAQGIIRLHKRQPPAHKGFGLRGA). Residues 241 to 266 (ATLTILLGIFFLCWGPFFLHLTLVVF) traverse the membrane as a helical segment. The Extracellular segment spans residues 267–279 (CPQHMTCSCIFKN). The chain crosses the membrane as a helical span at residues 280-300 (FKVFLTLIICNTIIDPLIYAF). Over 301–344 (RSQELRRTLKEVLLCSRWPGCWAEGGGDSVWPGSCVTLRGPLPP) the chain is Cytoplasmic. A lipid anchor (S-palmitoyl cysteine) is attached at Cys-315.

The protein belongs to the G-protein coupled receptor 1 family. In terms of assembly, interacts with MGRN1, but does not undergo MGRN1-mediated ubiquitination; this interaction competes with GNAS-binding and thus inhibits agonist-induced cAMP production. Interacts with OPN3; the interaction results in a decrease in MC1R-mediated cAMP signaling and ultimately a decrease in melanin production in melanocytes.

The protein localises to the cell membrane. In terms of biological role, receptor for MSH (alpha, beta and gamma) and ACTH. The activity of this receptor is mediated by G proteins which activate adenylate cyclase. Mediates melanogenesis, the production of eumelanin (black/brown) and phaeomelanin (red/yellow), via regulation of cAMP signaling in melanocytes. The chain is Melanocyte-stimulating hormone receptor (MC1R) from Callimico goeldii (Goeldi's marmoset).